A 294-amino-acid chain; its full sequence is uncharacterized protein (294 aa).

Disordered regions lie at residues 1 to 148 and 268 to 294; these read MFLR…LEKP and DEAA…GKGL. Phosphoserine occurs at positions 34 and 35. Over residues 35 to 44 the composition is skewed to low complexity; that stretch reads SSENSGSDWD. Positions 52 to 62 are enriched in basic and acidic residues; sequence DVGHPKTKDSG. Phosphoserine is present on residues Ser-71 and Ser-90. 2 stretches are compositionally biased toward basic and acidic residues: residues 73 to 92 and 278 to 294; these read PSKE…DSLK and GLER…GKGL.

This is an uncharacterized protein from Homo sapiens (Human).